A 552-amino-acid polypeptide reads, in one-letter code: Dihydroxyacetone kinase (552 aa).

The DhaK domain occupies 8-327 (QRTHLVSDVI…LLTEVETSNW (320 aa)). Residues 58 to 61 (GSGH), Lys-109, and Asp-114 each bind substrate. Residue His-220 is the Tele-hemiaminal-histidine intermediate of the active site. Positions 356-548 (ALVAGIVELV…LAMVFKALAE (193 aa)) constitute a DhaL domain. ATP is bound by residues 385–388 (DGDT), 431–432 (SS), Gly-468, 476–477 (TM), and 533–535 (DPG).

Homodimer. Requires Mg(2+) as cofactor. The cofactor is Ca(2+).

It carries out the reaction dihydroxyacetone + ATP = dihydroxyacetone phosphate + ADP + H(+). Its pathway is polyol metabolism; glycerol fermentation; glycerone phosphate from glycerol (oxidative route): step 2/2. Functionally, catalyzes the phosphorylation of dihydroxyacetone. The chain is Dihydroxyacetone kinase (dhaK) from Citrobacter freundii.